The following is a 742-amino-acid chain: Ectonucleotide pyrophosphatase/phosphodiesterase 1 (742 aa).

Residues 1 to 113 (MELQNDLESL…TGFHSKVPFK (113 aa)) are Cytoplasmic-facing. The chain crosses the membrane as a helical span at residues 114–134 (IIFRTLFGSLVFAIFLILMIN). The Extracellular portion of the chain corresponds to 135 to 742 (IAKPHHSTRV…SIDDLVDSDT (608 aa)). Asn-161 and Asn-204 each carry an N-linked (GlcNAc...) asparagine glycan. The segment at 168-545 (PLTIVISLDG…VFTIGSHGYD (378 aa)) is phosphodiesterase. Residue Thr-219 is the Nucleophile of the active site. Asn-264, Asn-296, and Asn-403 each carry an N-linked (GlcNAc...) asparagine glycan. Residues 640–659 (EETEQDNVDNDNDDNDDGNT) are compositionally biased toward acidic residues. Disordered regions lie at residues 640–670 (EETE…SSSL) and 686–711 (TLLG…TAST). The segment covering 691 to 711 (TSPSSRSSSSSSIQASATAST) has biased composition (low complexity).

Belongs to the nucleotide pyrophosphatase/phosphodiesterase family. In terms of processing, autophosphorylated as part of the catalytic cycle of phosphodiesterase/pyrophosphatase activity. N-glycosylated.

It is found in the membrane. The catalysed reaction is Hydrolytically removes 5'-nucleotides successively from the 3'-hydroxy termini of 3'-hydroxy-terminated oligonucleotides.. The enzyme catalyses a ribonucleoside 5'-triphosphate + H2O = a ribonucleoside 5'-phosphate + diphosphate + H(+). It carries out the reaction a 2'-deoxyribonucleoside 5'-triphosphate + H2O = a 2'-deoxyribonucleoside 5'-phosphate + diphosphate + H(+). Functionally, mediates extracellular nucleotide derived phosphate hydrolysis along with NPP2 and PHO5. This is Ectonucleotide pyrophosphatase/phosphodiesterase 1 (NPP1) from Saccharomyces cerevisiae (strain ATCC 204508 / S288c) (Baker's yeast).